The chain runs to 467 residues: Sialic acid-binding Ig-like lectin 12 (467 aa).

An N-terminal signal peptide occupies residues 1 to 18; sequence MLLLLLLLLLWGIKGVEG. Topologically, residues 19–353 are extracellular; that stretch reads QNPQEVFTLN…ATLSEMMMGT (335 aa). Residues 21–141 form the Ig-like V-type domain; the sequence is PQEVFTLNVE…TKYNYMWDKM (121 aa). Cystine bridges form between cysteine 40–cysteine 176, cysteine 45–cysteine 108, and cysteine 170–cysteine 219. N-linked (GlcNAc...) asparagine glycosylation is present at asparagine 46. Arginine 126 serves as a coordination point for N-acetylneuraminate. 2 consecutive Ig-like C2-type domains span residues 152-239 and 242-339; these read PQIL…LNVS and PKNL…LSLS. N-linked (GlcNAc...) asparagine glycans are attached at residues asparagine 167, asparagine 197, asparagine 216, asparagine 227, asparagine 237, asparagine 244, asparagine 262, asparagine 287, and asparagine 294. A disulfide bridge connects residues cysteine 278 and cysteine 323. Residues 354 to 374 traverse the membrane as a helical segment; sequence FVGSGVTALLFLSVCILLLAV. Over 375 to 467 the chain is Cytoplasmic; that stretch reads RSYRRKPARP…IKFPQRTAWP (93 aa). The ITIM motif signature appears at 430-435; that stretch reads IHYATL. Phosphotyrosine occurs at positions 432 and 455. Residues 453 to 458 carry the SLAM-like motif motif; the sequence is TEYSEI.

This sequence belongs to the immunoglobulin superfamily. SIGLEC (sialic acid binding Ig-like lectin) family. Homodimer; disulfide-linked. Interacts with PTPN6/SHP-1 and PTPN11/SHP-2 upon phosphorylation. In terms of processing, phosphorylation of Tyr-432 is required for binding to PTPN6 and PTPN11. Phosphorylation of Tyr-455 is involved in binding to PTPN6. Tyr-432 needs to be phosphorylated prior to Tyr-455. Expressed by monocytic/myeloid lineage cells. Found at higher levels in spleen, liver and heart. Found at lower levels in kidney and lung.

Its subcellular location is the membrane. Its function is as follows. Putative adhesion molecule that mediates sialic-acid dependent binding to cells. The sialic acid recognition site may be masked by cis interactions with sialic acids on the same cell surface. In the immune response, may act as an inhibitory receptor upon ligand induced tyrosine phosphorylation by recruiting cytoplasmic phosphatase(s) via their SH2 domain(s) that block signal transduction through dephosphorylation of signaling molecules. The polypeptide is Sialic acid-binding Ig-like lectin 12 (Siglec12) (Mus musculus (Mouse)).